The chain runs to 460 residues: MPNDRSVKRSVTVLGAGLAGTEAAWQVACAGIPVTLVEMRPVRRSPAHHSSDFAELVCSNSFGALSSDRAAGLLQEELRRLGSLVIRTADDHAVPAGGALAVDRGRYSAALTEILDQHPLVTIERREQMDLPEVDAVTVLATGPLTSESLANDLRGFTGRDDCHFFDAASPIVHGDSIDLNLAFRASRYDKGDADYINCPMNKAEFLAFREALLEAEQAELKDFDQESAKFFEGCLPIEELARRGEDTMRYGPLKPIGLWDPRWGDVNDRDVRRAKRAYAVVQLRQEDKDGRLWNLVGFQTNLKWGEQRRVLQMIPGLAQAEFVRFGVMHRNTFLESPQLLDPTLQFRTRRHLLAAGQITGTEGYAAAVAGGWLAGTNAARLVRGLDPIALPNTTMAGALTHFVSEAPTKKFQPMPPNFGLLPDLPERIRDKRARYGAYRDRSLADLEPIRALIPEPLLA.

Position 15–20 (15–20 (GAGLAG)) interacts with FAD.

The protein belongs to the MnmG family. TrmFO subfamily. It depends on FAD as a cofactor.

It localises to the cytoplasm. The catalysed reaction is uridine(54) in tRNA + (6R)-5,10-methylene-5,6,7,8-tetrahydrofolate + NADH + H(+) = 5-methyluridine(54) in tRNA + (6S)-5,6,7,8-tetrahydrofolate + NAD(+). It catalyses the reaction uridine(54) in tRNA + (6R)-5,10-methylene-5,6,7,8-tetrahydrofolate + NADPH + H(+) = 5-methyluridine(54) in tRNA + (6S)-5,6,7,8-tetrahydrofolate + NADP(+). In terms of biological role, catalyzes the folate-dependent formation of 5-methyl-uridine at position 54 (M-5-U54) in all tRNAs. In Synechococcus sp. (strain CC9902), this protein is Methylenetetrahydrofolate--tRNA-(uracil-5-)-methyltransferase TrmFO.